Consider the following 735-residue polypeptide: Mitochondrial potassium channel ATP-binding subunit (735 aa).

Residues Met-1–Phe-25 constitute a mitochondrion transit peptide. At Gln-26 to His-144 the chain is on the mitochondrial matrix side. A helical membrane pass occupies residues Leu-145–Ile-165. The region spanning Val-150–Arg-437 is the ABC transmembrane type-1 domain. The Mitochondrial intermembrane portion of the chain corresponds to Pro-166–Ser-195. Residues Thr-196–Leu-216 form a helical membrane-spanning segment. Residues Ser-217–Thr-295 lie on the Mitochondrial matrix side of the membrane. Residues Leu-296 to Leu-316 form a helical membrane-spanning segment. Residues Arg-317–Ser-735 lie on the Mitochondrial intermembrane side of the membrane. The ABC transporter domain occupies Val-472 to Arg-709. Gly-507–Thr-514 contributes to the ATP binding site. A disordered region spans residues Leu-712 to Ser-735.

The protein belongs to the ABC transporter superfamily. ABCB family. Multidrug resistance exporter (TC 3.A.1.201) subfamily. In terms of assembly, the mitochondrial potassium channel (mitoK(ATP)) is composed of 4 subunits of CCDC51/MITOK and 4 subunits of ABCB8/MITOSUR. Interacts with C10orf88/PAAT. Interacts with NRP1; NRP1 regulates ABCB8/MITOSUR protein levels in mitochondria. As to expression, ubiquitous.

The protein localises to the mitochondrion inner membrane. Its activity is regulated as follows. Channel activity inhibited by ATP via ABCB8/MITOSUR subunit. Its function is as follows. ATP-binding subunit of the mitochondrial ATP-gated potassium channel (mitoK(ATP)). Together with pore-forming subunit CCDC51/MITOK of the mitoK(ATP) channel, mediates ATP-dependent potassium currents across the mitochondrial inner membrane. An increase in ATP intracellular levels closes the channel, inhibiting K(+) transport, whereas a decrease in ATP levels enhances K(+) uptake in the mitochondrial matrix. Plays a role in mitochondrial iron transport. Required for maintenance of normal cardiac function, possibly by influencing mitochondrial iron export and regulating the maturation of cytosolic iron sulfur cluster-containing enzymes. The chain is Mitochondrial potassium channel ATP-binding subunit from Homo sapiens (Human).